A 370-amino-acid polypeptide reads, in one-letter code: 1-propanol dehydrogenase PduQ (370 aa).

Belongs to the iron-containing alcohol dehydrogenase family. In terms of assembly, interacts with PduP, probably via the N-terminus of PduQ. Fe cation serves as cofactor.

The protein localises to the bacterial microcompartment. It carries out the reaction 1-propanol + NAD(+) = propanal + NADH + H(+). The protein operates within polyol metabolism; 1,2-propanediol degradation. An iron-dependent alcohol dehydrogenase required for optimal 1,2-propanediol (1,2-PD) degradation. NAD(+) and NADH are regenerated internally within the bacterial microcompartment (BMC) dedicated to 1,2-PD degradation by the PduP and PduQ enzymes, which reduce NAD(+) and oxidize NADH respectively, although there must also be cofactor transport across the BMC. Its function is as follows. Expression of a cosmid containing the full 21-gene pdu operon in E.coli allows E.coli to grow on 1,2-propanediol (1,2-PD) with the appearance of bacterial microcompartments (BMC) in its cytoplasm. In terms of biological role, the 1,2-PD-specific bacterial microcompartment (BMC) concentrates low levels of 1,2-PD catabolic enzymes, concentrates volatile reaction intermediates thus enhancing pathway flux and keeps the level of toxic, mutagenic propionaldehyde low. The sequence is that of 1-propanol dehydrogenase PduQ from Citrobacter freundii.